The following is a 323-amino-acid chain: Extracellular endo-alpha-(1-&gt;5)-L-arabinanase 1 (323 aa).

The signal sequence occupies residues 1 to 32; the sequence is MKKKKTWKRFLHFSSAALAAGLIFTSAAPAEA. The Proton acceptor role is filled by aspartate 44. A substrate-binding site is contributed by aspartate 44. Aspartate 107 provides a ligand contact to Ca(2+). Residues glycine 125 and 160 to 163 contribute to the substrate site; that span reads NAID. Glutamate 165 provides a ligand contact to Ca(2+). 180-182 serves as a coordination point for substrate; it reads SFW. The Proton donor role is filled by glutamate 215. Aspartate 287 serves as a coordination point for Ca(2+).

The protein belongs to the glycosyl hydrolase 43 family. It depends on Ca(2+) as a cofactor.

It is found in the secreted. It catalyses the reaction Endohydrolysis of (1-&gt;5)-alpha-arabinofuranosidic linkages in (1-&gt;5)-arabinans.. It participates in glycan metabolism; L-arabinan degradation. Its function is as follows. Involved in the degradation of arabinan and is a key enzyme in the complete degradation of the plant cell wall. Catalyzes the internal cleavage of alpha-(1-&gt;5)-L-arabinofuranosyl residues of linear 1,5-alpha-L-arabinan and of branched sugar beet arabinan. It displays no activity against heavily substituted arabinans or a range of other polysaccharides (larch wood arabinogalactan, wheat arabinoxylan and p-nitrophenyl-alpha-L-arabinofuranoside). The enzyme activity is progressively reduced as alpha-(1-&gt;5)-chains become shorter or more highly substituted. The chain is Extracellular endo-alpha-(1-&gt;5)-L-arabinanase 1 (abnA) from Bacillus subtilis (strain 168).